The following is a 173-amino-acid chain: HTH-type transcriptional regulator IscR (173 aa).

Positions 2–131 constitute an HTH rrf2-type domain; the sequence is RLTSKGRYAV…NNITLGELMM (130 aa). Positions 28 to 51 form a DNA-binding region, H-T-H motif; that stretch reads LADISERQGISLSYLEQLFSKLRK. Residues C92, C98, and C104 each contribute to the [2Fe-2S] cluster site.

It depends on [2Fe-2S] cluster as a cofactor.

Regulates the transcription of several operons and genes involved in the biogenesis of Fe-S clusters and Fe-S-containing proteins. This chain is HTH-type transcriptional regulator IscR, found in Vibrio cholerae serotype O1 (strain ATCC 39315 / El Tor Inaba N16961).